The primary structure comprises 846 residues: Disrupted in schizophrenia 1 homolog (846 aa).

Disordered stretches follow at residues 1-53, 127-147, 231-257, 277-312, and 409-436; these read MQGA…IGFL, HSGV…GDSG, EAEP…GEPR, TRSN…QDGG, and LHGA…AQDS. The interaction with MAP1A stretch occupies residues 1–288; it reads MQGAGSRGAW…SNRQPECGMV (288 aa). 2 stretches are compositionally biased toward basic and acidic residues: residues 133–143 and 248–257; these read GNDRRQSERLT and GSDRPHGEPR. Positions 277–300 are enriched in polar residues; that stretch reads TRSNRQPECGMVSSSDAGFSSQDA. The interval 289–686 is interaction with TRAF3IP1; that stretch reads SSSDAGFSSQ…LERVWKADLE (398 aa). Positions 429–587 are required for localization to punctate cytoplasmic foci; sequence RRTTAQDSLP…LLEAKMLALS (159 aa). The necessary and sufficient for interaction with PCNT and localization at the centrosome stretch occupies residues 435 to 846; sequence DSLPGLAVTR…STAGAQEAED (412 aa). A coiled-coil region spans residues 440–489; the sequence is LAVTRRDWLMREKEQLQKEIEALRARVSVLEAKEQRLSQELEDQEMLLRW. Residues 588-846 form an interaction with ATF4 and ATF5 region; the sequence is GSCFSTAKEL…STAGAQEAED (259 aa). Positions 721-846 are interaction with NDEL1 and PAFAH1B1; the sequence is TAALAVPRTP…STAGAQEAED (126 aa). An interaction with PAFAH1B1 region spans residues 721 to 846; that stretch reads TAALAVPRTP…STAGAQEAED (126 aa). Residues 795–828 are interaction with NDEL1; sequence GHDEALFQSLQGELQMVKETLQTMFLQLQPAKEA.

As to quaternary structure, interacts with NDEL1. Interacts with CCDC88A (via C-terminus); the interaction is direct. Interacts with GSK3B. Interacts with tubulin alpha, ACTN2, ANKHD1, ATF4, ATF5, CEP63, EIF3S3, MAP1A, NDEL1, PAFAH1B1, RANBP9, SPTBN4, SYNE1 and TRAF3IP1. Interaction with microtubules may be mediated in part by TRAF3IP1. Interacts (via C-terminal) with PCNT. Interacts with CHCHD6. Interacts with CCDC141. Interacts with FBXW7, the substrate-recognition component of a SCF (SKP1-CUL1-F-box protein) E3 ubiquitin-protein ligase complex; the interaction targets DISC1 for proteasomal degradation. Interacts with ZNF365. Interacts with ATF4; inhibiting ATF4 transcription factor activity by disrupting ATF4 dimerization and DNA-binding. Interacts with PDE4B. Post-translationally, ubiquitinated. Ubiquitination with 'Lys-48'-linked polyubiquitin chains leads to its proteasomal degradation. In terms of tissue distribution, expressed in brain, heart, kidney, liver and thymus. Within the brain expression is high in the cerebral cortex, hippocampus and olfactory bulb and is also seen at lower levels in the cerebellum (at protein level).

The protein localises to the cytoplasm. Its subcellular location is the cytoskeleton. It localises to the mitochondrion. The protein resides in the microtubule organizing center. It is found in the centrosome. The protein localises to the postsynaptic density. Involved in the regulation of multiple aspects of embryonic and adult neurogenesis. Required for neural progenitor proliferation in the ventrical/subventrical zone during embryonic brain development and in the adult dentate gyrus of the hippocampus. Participates in the Wnt-mediated neural progenitor proliferation as a positive regulator by modulating GSK3B activity and CTNNB1 abundance. Plays a role as a modulator of the AKT-mTOR signaling pathway controlling the tempo of the process of newborn neurons integration during adult neurogenesis, including neuron positioning, dendritic development and synapse formation. Inhibits the activation of AKT-mTOR signaling upon interaction with CCDC88A. Regulates the migration of early-born granule cell precursors toward the dentate gyrus during the hippocampal development. Inhibits ATF4 transcription factor activity in neurons by disrupting ATF4 dimerization and DNA-binding. Plays a role, together with PCNT, in the microtubule network formation. The chain is Disrupted in schizophrenia 1 homolog from Rattus norvegicus (Rat).